A 179-amino-acid polypeptide reads, in one-letter code: ATP synthase subunit b (179 aa).

The helical transmembrane segment at 27 to 47 (TAITFLVMLVVLGKFAWGPIV) threads the bilayer.

The protein belongs to the ATPase B chain family. In terms of assembly, F-type ATPases have 2 components, F(1) - the catalytic core - and F(0) - the membrane proton channel. F(1) has five subunits: alpha(3), beta(3), gamma(1), delta(1), epsilon(1). F(0) has three main subunits: a(1), b(2) and c(10-14). The alpha and beta chains form an alternating ring which encloses part of the gamma chain. F(1) is attached to F(0) by a central stalk formed by the gamma and epsilon chains, while a peripheral stalk is formed by the delta and b chains.

Its subcellular location is the cell inner membrane. Functionally, f(1)F(0) ATP synthase produces ATP from ADP in the presence of a proton or sodium gradient. F-type ATPases consist of two structural domains, F(1) containing the extramembraneous catalytic core and F(0) containing the membrane proton channel, linked together by a central stalk and a peripheral stalk. During catalysis, ATP synthesis in the catalytic domain of F(1) is coupled via a rotary mechanism of the central stalk subunits to proton translocation. Its function is as follows. Component of the F(0) channel, it forms part of the peripheral stalk, linking F(1) to F(0). The protein is ATP synthase subunit b of Anaeromyxobacter sp. (strain K).